The sequence spans 464 residues: Cysteine--tRNA ligase (464 aa).

Residue cysteine 28 participates in Zn(2+) binding. Positions 30-40 match the 'HIGH' region motif; the sequence is ITAYDFCHIGH. Zn(2+)-binding residues include cysteine 210, histidine 235, and glutamate 239. The 'KMSKS' region signature appears at 267 to 271; sequence KMSKS. Position 270 (lysine 270) interacts with ATP.

This sequence belongs to the class-I aminoacyl-tRNA synthetase family. In terms of assembly, monomer. Zn(2+) is required as a cofactor.

The protein resides in the cytoplasm. It catalyses the reaction tRNA(Cys) + L-cysteine + ATP = L-cysteinyl-tRNA(Cys) + AMP + diphosphate. This Buchnera aphidicola subsp. Baizongia pistaciae (strain Bp) protein is Cysteine--tRNA ligase.